A 337-amino-acid chain; its full sequence is Ferredoxin--NADP reductase (337 aa).

FAD is bound by residues D35, Q43, Y48, A88, F122, D289, and T330.

This sequence belongs to the ferredoxin--NADP reductase type 2 family. In terms of assembly, homodimer. It depends on FAD as a cofactor.

The catalysed reaction is 2 reduced [2Fe-2S]-[ferredoxin] + NADP(+) + H(+) = 2 oxidized [2Fe-2S]-[ferredoxin] + NADPH. This Ehrlichia ruminantium (strain Gardel) protein is Ferredoxin--NADP reductase.